Consider the following 505-residue polypeptide: MGLVSSKKPDKEKPIKEKDKGQWSPLKVSAQDKDAPPLPPLVVFNHLTPPPPDEHLDEDKHFVVALYDYTAMNDRDLQMLKGEKLQVLKGTGDWWLARSLVTGREGYVPSNFVARVESLEMERWFFRSQGRKEAERQLLAPINKAGSFLIRESETNKGAFSLSVKDVTTQGELIKHYKIRCLDEGGYYISPRITFPSLQALVQHYSKKGDGLCQRLTLPCVRPAPQNPWAQDEWEIPRQSLRLVRKLGSGQFGEVWMGYYKNNMKVAIKTLKEGTMSPEAFLGEANVMKALQHERLVRLYAVVTKEPIYIVTEYMARGCLLDFLKTDEGSRLSLPRLIDMSAQIAEGMAYIERMNSIHRDLRAANILVSEALCCKIADFGLARIIDSEYTAQEGAKFPIKWTAPEAIHFGVFTIKADVWSFGVLLMEVVTYGRVPYPGMSNPEVIRNLERGYRMPRPDTCPPELYRGVIAECWRSRPEERPTFEFLQSVLEDFYTATERQYELQP.

Positions 1-37 (MGLVSSKKPDKEKPIKEKDKGQWSPLKVSAQDKDAPP) are disordered. G2 is lipidated: N-myristoyl glycine. A compositionally biased stretch (basic and acidic residues) spans 7 to 21 (KKPDKEKPIKEKDKG). Residues 58–118 (EDKHFVVALY…PSNFVARVES (61 aa)) form the SH3 domain. The SH2 domain occupies 124 to 220 (WFFRSQGRKE…GLCQRLTLPC (97 aa)). The Protein kinase domain maps to 241-494 (LRLVRKLGSG…FLQSVLEDFY (254 aa)). ATP-binding positions include 247-255 (LGSGQFGEV) and K269. The active-site Proton acceptor is D360. At Y389 the chain carries Phosphotyrosine; by autocatalysis.

This sequence belongs to the protein kinase superfamily. Tyr protein kinase family. SRC subfamily. In terms of assembly, interacts with CBL (via SH2 domain). Interacts with CD79A and CD79B (via SH2 domain). Phosphorylated on tyrosine residues after antibody-mediated surface engagement of the B-cell antigen receptor (BCR). In terms of processing, ubiquitination of activated BLK by the UBE3A ubiquitin protein ligase leads to its degradation by the ubiquitin-proteasome pathway. In terms of tissue distribution, expressed in lymphatic organs, pancreatic islets, Leydig cells, striate ducts of salivary glands and hair follicles.

The protein resides in the cell membrane. It carries out the reaction L-tyrosyl-[protein] + ATP = O-phospho-L-tyrosyl-[protein] + ADP + H(+). Antibody-mediated surface engagement of the B-cell antigen receptor (BCR) which results in the phosphorylation of BLK on tyrosine residues, stimulates the enzymatic activity. Functionally, non-receptor tyrosine kinase involved in B-lymphocyte development, differentiation and signaling. B-cell receptor (BCR) signaling requires a tight regulation of several protein tyrosine kinases and phosphatases, and associated coreceptors. Binding of antigen to the B-cell antigen receptor (BCR) triggers signaling that ultimately leads to B-cell activation. Signaling through BLK plays an important role in transmitting signals through surface immunoglobulins and supports the pro-B to pre-B transition, as well as the signaling for growth arrest and apoptosis downstream of B-cell receptor. Specifically binds and phosphorylates CD79A at 'Tyr-188'and 'Tyr-199', as well as CD79B at 'Tyr-196' and 'Tyr-207'. Also phosphorylates the immunoglobulin G receptors FCGR2A, FCGR2B and FCGR2C. With FYN and LYN, plays an essential role in pre-B-cell receptor (pre-BCR)-mediated NF-kappa-B activation. Also contributes to BTK activation by indirectly stimulating BTK intramolecular autophosphorylation. In pancreatic islets, acts as a modulator of beta-cells function through the up-regulation of PDX1 and NKX6-1 and consequent stimulation of insulin secretion in response to glucose. Phosphorylates CGAS, promoting retention of CGAS in the cytosol. This Homo sapiens (Human) protein is Tyrosine-protein kinase Blk (BLK).